A 235-amino-acid chain; its full sequence is Protein GMH1 homolog (235 aa).

At Met-1–Asp-54 the chain is on the cytoplasmic side. A helical membrane pass occupies residues Phe-55–Phe-75. The Lumenal portion of the chain corresponds to Tyr-76 to Thr-88. A helical transmembrane segment spans residues Phe-89–Ile-109. Topologically, residues Ala-110–Asn-140 are cytoplasmic. A helical transmembrane segment spans residues Ser-141 to Thr-161. At Arg-162 to Tyr-175 the chain is on the lumenal side. A helical transmembrane segment spans residues Leu-176–Leu-196. Residues Lys-197–Ala-201 lie on the Cytoplasmic side of the membrane. A helical transmembrane segment spans residues Leu-202–Val-222. The Lumenal portion of the chain corresponds to Pro-223 to Ala-235.

This sequence belongs to the unc-50 family.

The protein resides in the endoplasmic reticulum membrane. Its function is as follows. Has a role in meiosis. The chain is Protein GMH1 homolog (mug16) from Schizosaccharomyces pombe (strain 972 / ATCC 24843) (Fission yeast).